The following is a 315-amino-acid chain: Taste receptor type 2 member 3 (315 aa).

Residues 1–5 lie on the Extracellular side of the membrane; sequence MGLTD. Residues 6-26 traverse the membrane as a helical segment; the sequence is GVFLIVCGAQFTLGILXNGFI. Topologically, residues 27–41 are cytoplasmic; sequence GLVNGRSWFKTKRMS. The helical transmembrane segment at 42-62 threads the bilayer; it reads LSDFIIATLALSRIILLCIIL. Over 63–93 the chain is Extracellular; it reads TDSFLIVFSVKEHDSGIIMQLIDVFWTFTNH. The chain crosses the membrane as a helical span at residues 94–114; it reads LSIWFATCLGVLYCLKIASFS. Over 115-127 the chain is Cytoplasmic; sequence HPTFLWLKWRVSR. Residues 128–148 form a helical membrane-spanning segment; sequence VMVWMLLGALLLSCGSTASLI. Residues 149–185 are Extracellular-facing; the sequence is NEFKLYSVLRGIEATRNVTEHFRKKRNEYYLIHVLGT. N-linked (GlcNAc...) asparagine glycosylation is present at Asn-165. Residues 186 to 206 form a helical membrane-spanning segment; that stretch reads LWYLPPLVVSLASYFLLIFSL. Residues 207–233 are Cytoplasmic-facing; sequence GRHTRQMLQNSTSSRDPSTEAHKRAIR. Residues 234–254 traverse the membrane as a helical segment; the sequence is IILSFFFLFLLYFLAFLIASF. Residues 255–265 lie on the Extracellular side of the membrane; sequence GNFLPETKMAK. The chain crosses the membrane as a helical span at residues 266–286; sequence MIGEVMTMFYPAGHSFIVILG. Residues 287 to 315 lie on the Cytoplasmic side of the membrane; that stretch reads NSKLKQTFVEMLRCESGHLKPGSKGPIFS.

Belongs to the G-protein coupled receptor T2R family.

Its subcellular location is the membrane. In terms of biological role, gustducin-coupled receptor implicated in the perception of bitter compounds in the oral cavity and the gastrointestinal tract. Signals through PLCB2 and the calcium-regulated cation channel TRPM5. This is Taste receptor type 2 member 3 (TAS2R3) from Papio hamadryas (Hamadryas baboon).